We begin with the raw amino-acid sequence, 89 residues long: Small ribosomal subunit protein uS15 (89 aa).

Belongs to the universal ribosomal protein uS15 family. Part of the 30S ribosomal subunit. Forms a bridge to the 50S subunit in the 70S ribosome, contacting the 23S rRNA.

In terms of biological role, one of the primary rRNA binding proteins, it binds directly to 16S rRNA where it helps nucleate assembly of the platform of the 30S subunit by binding and bridging several RNA helices of the 16S rRNA. Forms an intersubunit bridge (bridge B4) with the 23S rRNA of the 50S subunit in the ribosome. In Synechocystis sp. (strain ATCC 27184 / PCC 6803 / Kazusa), this protein is Small ribosomal subunit protein uS15.